The following is a 124-amino-acid chain: V-type proton ATPase subunit F 1 (124 aa).

Ser-87 carries the phosphoserine modification.

Belongs to the V-ATPase F subunit family. In terms of assembly, V-ATPase is a heteromultimeric enzyme made up of two complexes: the ATP-hydrolytic V1 complex and the proton translocation V0 complex. The V1 complex consists of three catalytic AB heterodimers that form a heterohexamer, three peripheral stalks each consisting of EG heterodimers, one central rotor including subunits D and F, and the regulatory subunits C and H. The proton translocation complex V0 consists of the proton transport subunit a, a ring of proteolipid subunits c9c'', rotary subunit d, subunits e and f, and the accessory subunits VhaAC45 and ATP6AP2.

Functionally, subunit of the V1 complex of vacuolar(H+)-ATPase (V-ATPase), a multisubunit enzyme composed of a peripheral complex (V1) that hydrolyzes ATP and a membrane integral complex (V0) that translocates protons. V-ATPase is responsible for acidifying and maintaining the pH of intracellular compartments and in some cell types, is targeted to the plasma membrane, where it is responsible for acidifying the extracellular environment. This is V-type proton ATPase subunit F 1 (Vha14-1) from Drosophila melanogaster (Fruit fly).